The following is a 1436-amino-acid chain: Probable ATP-dependent RNA helicase spindle-E (1436 aa).

One can recognise a Helicase ATP-binding domain in the interval 124 to 291; sequence LAAINANPVV…FTTTNSIPPV (168 aa). 137–144 contributes to the ATP binding site; sequence GETGCGKT. A DEAH box motif is present at residues 237-240; it reads DEVH. The Helicase C-terminal domain occupies 337–524; that stretch reads KIIMVIDNME…NSVLRAKELE (188 aa). The Tudor domain maps to 940–1003; the sequence is ACDISKGMMV…RFMSEELIQQ (64 aa).

Belongs to the DEAD box helicase family. DEAH subfamily.

It localises to the cytoplasm. It catalyses the reaction ATP + H2O = ADP + phosphate + H(+). In terms of biological role, probable ATP-binding RNA helicase which plays a central role during spermatogenesis and oogenesis by repressing transposable elements and preventing their mobilization, which is essential for the germline integrity. Acts via the piRNA metabolic process, which mediates the repression of transposable elements during meiosis by forming complexes composed of piRNAs and Piwi and govern the methylation and subsequent repression of transposons. Involved in the repression of LTR retrotransposon copia. Also involved in telomere regulation by repressing specialized telomeric retroelements HeT-A, TAHRE, and TART; Drosophila telomeres being maintained by transposition of specialized telomeric retroelements. Involved in telomeric trans-silencing, a repression mechanism by which a transposon or a transgene inserted in subtelomeric heterochromatin has the capacity to repress in trans in the female germline, a homologous transposon, or transgene located in euchromatin. Involved in the repression of testis-expressed Stellate genes by the homologous Su(Ste) repeats. Required for anteroposterior and dorsoventral axis formation during oogenesis. This chain is Probable ATP-dependent RNA helicase spindle-E (spn-E), found in Drosophila yakuba (Fruit fly).